A 180-amino-acid chain; its full sequence is ATP-dependent protease subunit HslV (180 aa).

Thr-5 is an active-site residue. The Na(+) site is built by Gly-165, Cys-168, and Thr-171.

This sequence belongs to the peptidase T1B family. HslV subfamily. In terms of assembly, a double ring-shaped homohexamer of HslV is capped on each side by a ring-shaped HslU homohexamer. The assembly of the HslU/HslV complex is dependent on binding of ATP.

It localises to the cytoplasm. The enzyme catalyses ATP-dependent cleavage of peptide bonds with broad specificity.. Allosterically activated by HslU binding. Protease subunit of a proteasome-like degradation complex believed to be a general protein degrading machinery. The protein is ATP-dependent protease subunit HslV of Helicobacter hepaticus (strain ATCC 51449 / 3B1).